Here is a 127-residue protein sequence, read N- to C-terminus: Small ribosomal subunit protein uS11 (127 aa).

It belongs to the universal ribosomal protein uS11 family. In terms of assembly, part of the 30S ribosomal subunit. Interacts with proteins S7 and S18. Binds to IF-3.

Functionally, located on the platform of the 30S subunit, it bridges several disparate RNA helices of the 16S rRNA. Forms part of the Shine-Dalgarno cleft in the 70S ribosome. This is Small ribosomal subunit protein uS11 from Streptococcus pyogenes serotype M49 (strain NZ131).